Reading from the N-terminus, the 234-residue chain is Adenosine 5'-phosphosulfate reductase (234 aa).

[4Fe-4S] cluster-binding residues include Cys-120, Cys-121, Cys-203, and Cys-206. Cys-229 functions as the Nucleophile; cysteine thiosulfonate intermediate in the catalytic mechanism.

This sequence belongs to the PAPS reductase family. CysH subfamily. [4Fe-4S] cluster serves as cofactor.

Its subcellular location is the cytoplasm. It carries out the reaction [thioredoxin]-disulfide + sulfite + AMP + 2 H(+) = adenosine 5'-phosphosulfate + [thioredoxin]-dithiol. It participates in sulfur metabolism; hydrogen sulfide biosynthesis; sulfite from sulfate. In terms of biological role, catalyzes the formation of sulfite from adenosine 5'-phosphosulfate (APS) using thioredoxin as an electron donor. This chain is Adenosine 5'-phosphosulfate reductase, found in Bacillus cereus (strain 03BB102).